Consider the following 413-residue polypeptide: Arginine biosynthesis bifunctional protein ArgJ (413 aa).

Positions 154, 180, 191, 277, 408, and 413 each coordinate substrate. Threonine 191 (nucleophile) is an active-site residue.

It belongs to the ArgJ family. As to quaternary structure, heterotetramer of two alpha and two beta chains.

Its subcellular location is the cytoplasm. It carries out the reaction N(2)-acetyl-L-ornithine + L-glutamate = N-acetyl-L-glutamate + L-ornithine. It catalyses the reaction L-glutamate + acetyl-CoA = N-acetyl-L-glutamate + CoA + H(+). It functions in the pathway amino-acid biosynthesis; L-arginine biosynthesis; L-ornithine and N-acetyl-L-glutamate from L-glutamate and N(2)-acetyl-L-ornithine (cyclic): step 1/1. It participates in amino-acid biosynthesis; L-arginine biosynthesis; N(2)-acetyl-L-ornithine from L-glutamate: step 1/4. Catalyzes two activities which are involved in the cyclic version of arginine biosynthesis: the synthesis of N-acetylglutamate from glutamate and acetyl-CoA as the acetyl donor, and of ornithine by transacetylation between N(2)-acetylornithine and glutamate. The protein is Arginine biosynthesis bifunctional protein ArgJ of Synechocystis sp. (strain ATCC 27184 / PCC 6803 / Kazusa).